The following is a 227-amino-acid chain: MAAQPLLRILCLAGFRQSERGFREKTGALRKALRGRAELVCLSGPHPVVDAAGSEGARPDSGPCPPEEQPQGWWFSEQEADVFLALEEPTACRGLEEALETVAQALNKLGPFDGILGFSQGAALAALVCALGQGGDPRFPLPRFVILVSGFCPRGLGLMEPIMQGPLSLPSLHVFGDTDGVIPSQESMQLCSRFDGAVTLTHSGGHFIPAAAPQRQAYLKFLDQFAD.

Active-site charge relay system residues include S119, D179, and H206.

The protein belongs to the LovG family.

The enzyme catalyses a carboxylic ester + H2O = an alcohol + a carboxylate + H(+). Functionally, exhibits ester hydrolase activity with a strong preference for long-chain alkyl ester substrates and high selectivity against a variety of short, branched, and substituted esters. Is able to hydrolyze ester bonds within a wide range of p-nitrophenyl derivatives (C2-C14) in vitro, with a strong preference toward substrates of &gt;8 carbons. This is Esterase OVCA2 (OVCA2) from Bos taurus (Bovine).